We begin with the raw amino-acid sequence, 145 residues long: Cuticle protein 65 (145 aa).

7 repeat units span residues 27-30 (AAPA), 33-37 (AAPAV), 39-42 (AAPA), 86-89 (AAPV), 92-95 (AAPA), 98-101 (AAPA), and 123-126 (AAPA).

In terms of biological role, component of the cuticle of migratory locust which contains more than 100 different structural proteins. In Locusta migratoria (Migratory locust), this protein is Cuticle protein 65.